Here is a 471-residue protein sequence, read N- to C-terminus: Protoporphyrinogen oxidase (471 aa).

Residues 16-21 (GGGISG), 39-40 (ES), A47, 61-64 (GPNS), V251, W408, and 446-448 (VGL) contribute to the FAD site.

Belongs to the protoporphyrinogen/coproporphyrinogen oxidase family. Protoporphyrinogen oxidase subfamily. As to quaternary structure, monomer. Homodimer. The cofactor is FAD.

It is found in the cytoplasm. The protein localises to the cell membrane. The enzyme catalyses protoporphyrinogen IX + 3 O2 = protoporphyrin IX + 3 H2O2. It participates in porphyrin-containing compound metabolism; protoporphyrin-IX biosynthesis; protoporphyrin-IX from protoporphyrinogen-IX: step 1/1. Its activity is regulated as follows. Strongly inhibited by acifluorfen. Functionally, catalyzes the 6-electron oxidation of protoporphyrinogen-IX to form protoporphyrin-IX. Does not oxidize coproporphyrinogen III. Involved in the classical protoporphyrin-dependent (PPD) heme b biosynthesis. The chain is Protoporphyrinogen oxidase from Myxococcus xanthus.